Reading from the N-terminus, the 328-residue chain is Malate dehydrogenase (328 aa).

12–18 contributes to the NAD(+) binding site; sequence GAAGQIG. Residues R95 and R101 each coordinate substrate. Residues N108, Q115, and 132–134 each bind NAD(+); that span reads VGN. The substrate site is built by N134 and R165. H190 acts as the Proton acceptor in catalysis.

This sequence belongs to the LDH/MDH superfamily. MDH type 2 family.

The catalysed reaction is (S)-malate + NAD(+) = oxaloacetate + NADH + H(+). In terms of biological role, catalyzes the reversible oxidation of malate to oxaloacetate. In Delftia acidovorans (strain DSM 14801 / SPH-1), this protein is Malate dehydrogenase.